A 361-amino-acid chain; its full sequence is Large ribosomal subunit protein uL3 (361 aa).

The span at 1–14 shows a compositional bias: basic residues; that stretch reads MGRGGRRNPGRPRR. Disordered regions lie at residues 1–33 and 337–361; these read MGRG…PRIR and TSQQ…PASA.

It belongs to the universal ribosomal protein uL3 family. As to quaternary structure, part of the 50S ribosomal subunit. Forms a cluster with proteins L14 and L24e.

Its function is as follows. One of the primary rRNA binding proteins, it binds directly near the 3'-end of the 23S rRNA, where it nucleates assembly of the 50S subunit. The chain is Large ribosomal subunit protein uL3 from Methanopyrus kandleri (strain AV19 / DSM 6324 / JCM 9639 / NBRC 100938).